Consider the following 497-residue polypeptide: Protein nucleotidyltransferase YdiU (497 aa).

Residues Gly92, Gly94, Arg95, Lys114, Asp126, Gly127, Arg177, and Arg184 each contribute to the ATP site. The active-site Proton acceptor is Asp261. Mg(2+)-binding residues include Asn262 and Asp271. Asp271 lines the ATP pocket.

It belongs to the SELO family. It depends on Mg(2+) as a cofactor. Mn(2+) serves as cofactor.

The catalysed reaction is L-seryl-[protein] + ATP = 3-O-(5'-adenylyl)-L-seryl-[protein] + diphosphate. It catalyses the reaction L-threonyl-[protein] + ATP = 3-O-(5'-adenylyl)-L-threonyl-[protein] + diphosphate. The enzyme catalyses L-tyrosyl-[protein] + ATP = O-(5'-adenylyl)-L-tyrosyl-[protein] + diphosphate. It carries out the reaction L-histidyl-[protein] + UTP = N(tele)-(5'-uridylyl)-L-histidyl-[protein] + diphosphate. The catalysed reaction is L-seryl-[protein] + UTP = O-(5'-uridylyl)-L-seryl-[protein] + diphosphate. It catalyses the reaction L-tyrosyl-[protein] + UTP = O-(5'-uridylyl)-L-tyrosyl-[protein] + diphosphate. Functionally, nucleotidyltransferase involved in the post-translational modification of proteins. It can catalyze the addition of adenosine monophosphate (AMP) or uridine monophosphate (UMP) to a protein, resulting in modifications known as AMPylation and UMPylation. The polypeptide is Protein nucleotidyltransferase YdiU (Bordetella petrii (strain ATCC BAA-461 / DSM 12804 / CCUG 43448)).